A 602-amino-acid chain; its full sequence is Exopolysaccharide phosphotransferase SCO2594 (602 aa).

The tract at residues 251–271 (PRAGEDLDAGDGAAGGPRPGL) is disordered.

This sequence belongs to the stealth family.

This chain is Exopolysaccharide phosphotransferase SCO2594, found in Streptomyces coelicolor (strain ATCC BAA-471 / A3(2) / M145).